A 266-amino-acid chain; its full sequence is Thymidylate synthase (266 aa).

Residue R24 coordinates dUMP. H54 serves as a coordination point for (6R)-5,10-methylene-5,6,7,8-tetrahydrofolate. Position 129 to 130 (129 to 130 (RR)) interacts with dUMP. Catalysis depends on C149, which acts as the Nucleophile. Residues 169-172 (RSAD), N180, and 210-212 (HIY) each bind dUMP. Residue D172 coordinates (6R)-5,10-methylene-5,6,7,8-tetrahydrofolate. A265 is a binding site for (6R)-5,10-methylene-5,6,7,8-tetrahydrofolate.

This sequence belongs to the thymidylate synthase family. Bacterial-type ThyA subfamily. Homodimer.

It localises to the cytoplasm. The enzyme catalyses dUMP + (6R)-5,10-methylene-5,6,7,8-tetrahydrofolate = 7,8-dihydrofolate + dTMP. It functions in the pathway pyrimidine metabolism; dTTP biosynthesis. Functionally, catalyzes the reductive methylation of 2'-deoxyuridine-5'-monophosphate (dUMP) to 2'-deoxythymidine-5'-monophosphate (dTMP) while utilizing 5,10-methylenetetrahydrofolate (mTHF) as the methyl donor and reductant in the reaction, yielding dihydrofolate (DHF) as a by-product. This enzymatic reaction provides an intracellular de novo source of dTMP, an essential precursor for DNA biosynthesis. The polypeptide is Thymidylate synthase (Corynebacterium glutamicum (strain R)).